We begin with the raw amino-acid sequence, 432 residues long: Adenylosuccinate synthetase (432 aa).

Residues 13-19 (GDEGKGK) and 41-43 (GHT) each bind GTP. The Proton acceptor role is filled by aspartate 14. Residues aspartate 14 and glycine 41 each coordinate Mg(2+). IMP contacts are provided by residues 14–17 (DEGK), 39–42 (NAGH), threonine 130, arginine 144, glutamine 225, threonine 240, and arginine 304. Histidine 42 (proton donor) is an active-site residue. 300–306 (ATTGRRR) contacts substrate. GTP-binding positions include arginine 306, 332–334 (KLD), and 415–417 (STG).

It belongs to the adenylosuccinate synthetase family. Homodimer. The cofactor is Mg(2+).

It is found in the cytoplasm. The enzyme catalyses IMP + L-aspartate + GTP = N(6)-(1,2-dicarboxyethyl)-AMP + GDP + phosphate + 2 H(+). It participates in purine metabolism; AMP biosynthesis via de novo pathway; AMP from IMP: step 1/2. Functionally, plays an important role in the de novo pathway of purine nucleotide biosynthesis. Catalyzes the first committed step in the biosynthesis of AMP from IMP. This is Adenylosuccinate synthetase from Shigella flexneri serotype 5b (strain 8401).